Reading from the N-terminus, the 441-residue chain is tRNA (adenine(37)-N6)-methyltransferase (441 aa).

In terms of domain architecture, TsaA-like spans 30 to 168; it reads TEPVGYLESC…YIAEYDSPQN (139 aa). S-adenosyl-L-methionine is bound by residues 47 to 49, 90 to 91, R117, L127, and 148 to 151; these read PRQ, HK, and IHGT. Over residues 179–192 the composition is skewed to polar residues; that stretch reads QNNQHTPNTVSQSD. Disordered regions lie at residues 179–231 and 264–284; these read QNNQ…EENY and SSVAEEQIGPYCPEKSFSEKG.

It belongs to the tRNA methyltransferase O family.

It carries out the reaction N(6)-L-threonylcarbamoyladenosine(37) in tRNA + S-adenosyl-L-methionine = N(6)-methyl,N(6)-L-threonylcarbamoyladenosine(37) in tRNA + S-adenosyl-L-homocysteine + H(+). Functionally, S-adenosyl-L-methionine-dependent methyltransferase responsible for the addition of the methyl group in the formation of N6-methyl-N6-threonylcarbamoyladenosine at position 37 (m(6)t(6)A37) of the tRNA anticodon loop of tRNA(Ser)(GCU). The methyl group of m(6)t(6)A37 may improve the efficiency of the tRNA decoding ability. The sequence is that of tRNA (adenine(37)-N6)-methyltransferase from Homo sapiens (Human).